A 483-amino-acid chain; its full sequence is Chromatin structure-remodeling complex protein RSC6 (483 aa).

Disordered regions lie at residues 142–183 (KRKR…EAES) and 273–309 (AQDG…DKPE). Residues 148–158 (SLSLPLNLQQP) show a composition bias toward low complexity. Positions 171–180 (DNGEDEDSAE) are enriched in acidic residues.

This sequence to yeast SNF12. In terms of assembly, interacts directly with RSC8. Component of the two forms of the RSC complex composed of at least either RSC1 or RSC2, and ARP7, ARP9, LDB7, NPL6, RSC3, RSC30, RSC4, RSC58, RSC6, RSC8, RSC9, SFH1, STH1, HTL1 and probably RTT102. The complexes interact with histone and histone variant components of centromeric chromatin.

Its subcellular location is the nucleus. In terms of biological role, component of the chromatin structure-remodeling complex (RSC), which is involved in transcription regulation and nucleosome positioning. RSC is responsible for the transfer of a histone octamer from a nucleosome core particle to naked DNA. The reaction requires ATP and involves an activated RSC-nucleosome intermediate. Remodeling reaction also involves DNA translocation, DNA twist and conformational change. As a reconfigurer of centromeric and flanking nucleosomes, RSC complex is required both for proper kinetochore function in chromosome segregation and, via a PKC1-dependent signaling pathway, for organization of the cellular cytoskeleton. This subunit is essential for mitotic growth and suppresses formamide sensitivity of the RSC8 mutants. In Saccharomyces cerevisiae (strain ATCC 204508 / S288c) (Baker's yeast), this protein is Chromatin structure-remodeling complex protein RSC6 (RSC6).